Here is a 79-residue protein sequence, read N- to C-terminus: Cytoinsectotoxin-3 (79 aa).

It belongs to the cationic peptide 06 (cytoinsectotoxin) family. As to expression, expressed by the venom gland.

The protein localises to the secreted. Functionally, insecticidal and antimicrobial peptide. Has insecticidal activity against larvae of flesh fly S.carnaria. Has antibacterial activity against Gram-positive bacterium B.subtilis B-501 (MIC=0.63 uM) and Gram-negative bacterium E.coli DH5alpha (MIC=2.5 uM). The protein is Cytoinsectotoxin-3 of Lachesana tarabaevi (Spider).